Reading from the N-terminus, the 209-residue chain is V-type ATP synthase subunit D (209 aa).

It belongs to the V-ATPase D subunit family.

In terms of biological role, produces ATP from ADP in the presence of a proton gradient across the membrane. The protein is V-type ATP synthase subunit D of Anaeromyxobacter dehalogenans (strain 2CP-C).